The primary structure comprises 120 residues: Testis-expressed protein 48 (120 aa).

Residues 29 to 45 (KVPSQTQEHKPSTQNLL) show a composition bias toward polar residues. The interval 29-86 (KVPSQTQEHKPSTQNLLLQKDELDRQNPKRINAVSHLPSRTPLIQTKKSTSSSSSEFE) is disordered. A compositionally biased stretch (low complexity) spans 74 to 83 (TKKSTSSSSS).

The sequence is that of Testis-expressed protein 48 from Homo sapiens (Human).